Consider the following 389-residue polypeptide: Na(+)/H(+) antiporter NhaA 1 (389 aa).

11 helical membrane-spanning segments follow: residues 12–32, 62–82, 97–117, 128–148, 157–177, 184–204, 220–240, 260–280, 282–302, 331–351, and 365–385; these read VLNE…ALLV, FLLW…GLEL, IVLP…LFAL, GWAI…MMCG, IFLL…IAIF, IVAF…NILG, ISVL…AFFI, FWLA…VNLS, IDIG…LFVG, LYGV…IDGL, and LAIL…LKFF.

Belongs to the NhaA Na(+)/H(+) (TC 2.A.33) antiporter family.

It localises to the cell inner membrane. The catalysed reaction is Na(+)(in) + 2 H(+)(out) = Na(+)(out) + 2 H(+)(in). In terms of biological role, na(+)/H(+) antiporter that extrudes sodium in exchange for external protons. The sequence is that of Na(+)/H(+) antiporter NhaA 1 from Campylobacter jejuni subsp. jejuni serotype O:6 (strain 81116 / NCTC 11828).